Consider the following 313-residue polypeptide: Ribosomal protein L11 methyltransferase (313 aa).

S-adenosyl-L-methionine is bound by residues Thr-164, Gly-185, Asp-207, and Asn-249.

Belongs to the methyltransferase superfamily. PrmA family.

It is found in the cytoplasm. The enzyme catalyses L-lysyl-[protein] + 3 S-adenosyl-L-methionine = N(6),N(6),N(6)-trimethyl-L-lysyl-[protein] + 3 S-adenosyl-L-homocysteine + 3 H(+). Methylates ribosomal protein L11. This chain is Ribosomal protein L11 methyltransferase, found in Clostridium botulinum (strain Eklund 17B / Type B).